A 342-amino-acid chain; its full sequence is tRNA-specific 2-thiouridylase MnmA (342 aa).

Residues 6–13 (LLSGGVDS) and Leu32 contribute to the ATP site. Catalysis depends on Cys92, which acts as the Nucleophile. Residues Cys92 and Cys191 are joined by a disulfide bond. Gly116 is a binding site for ATP. Residues 138-140 (KDQ) form an interaction with tRNA region. Cys191 (cysteine persulfide intermediate) is an active-site residue. Residues 293 to 294 (RY) form an interaction with tRNA region.

Belongs to the MnmA/TRMU family.

It localises to the cytoplasm. The enzyme catalyses S-sulfanyl-L-cysteinyl-[protein] + uridine(34) in tRNA + AH2 + ATP = 2-thiouridine(34) in tRNA + L-cysteinyl-[protein] + A + AMP + diphosphate + H(+). Catalyzes the 2-thiolation of uridine at the wobble position (U34) of tRNA, leading to the formation of s(2)U34. The chain is tRNA-specific 2-thiouridylase MnmA from Helicobacter pylori (strain G27).